Here is a 461-residue protein sequence, read N- to C-terminus: Putative cytochrome P450 132 (461 aa).

Cys409 lines the heme pocket.

The protein belongs to the cytochrome P450 family. Heme serves as cofactor.

The polypeptide is Putative cytochrome P450 132 (cyp132) (Mycobacterium bovis (strain ATCC BAA-935 / AF2122/97)).